The sequence spans 287 residues: Serine/arginine-rich SC35-like splicing factor SCL33 (287 aa).

The tract at residues 1–34 (MRGRSYTPSPPRGYGRRGRSPSPRGRYGGRSRDL) is disordered. Phosphoserine occurs at positions 9 and 20. Residues 36-114 (TSLLVRNLRH…RELTVVFAEE (79 aa)) enclose the RRM domain. A compositionally biased stretch (basic and acidic residues) spans 116 to 132 (RKKPTEMRARERGGGRF). The disordered stretch occupies residues 116-287 (RKKPTEMRAR…QYDEDRSPSQ (172 aa)). 5 positions are modified to phosphoserine: S165, S175, S177, S188, and S190. Positions 177–187 (SPREERYDGRR) are enriched in basic and acidic residues. The segment covering 220–237 (SISRSPRRSRSPSPKRNR) has biased composition (basic residues). Residues S238, S248, S271, S284, and S286 each carry the phosphoserine modification. Over residues 244–260 (SISRSPRRSRSPRRSRR) the composition is skewed to basic residues. Over residues 278 to 287 (QYDEDRSPSQ) the composition is skewed to basic and acidic residues.

Belongs to the splicing factor SR family. SCL subfamily. Component of the spliceosome. Homodimer. Interacts with AFC2, CYP59, RS2Z33, RNU1 and SR45. The interaction with AFC2 depends on phosphorylation status. Post-translationally, phosphorylated by AFC2. In terms of tissue distribution, ubiquitous. Mostly expressed in roots, fruits and flowers, and, to a lower extent, in leaves.

Its subcellular location is the nucleus speckle. It localises to the nucleus. It is found in the nucleoplasm. The protein localises to the cytoplasm. Its function is as follows. Involved in intron recognition and spliceosome assembly. Binds to multiple 5'-GAAG-3' repeats found in its third intron, suggesting autoregulation of alternative splicing. May be necessary for accurate splicing of the 3' region of introns. The chain is Serine/arginine-rich SC35-like splicing factor SCL33 (SCL33) from Arabidopsis thaliana (Mouse-ear cress).